Here is a 302-residue protein sequence, read N- to C-terminus: N-acetylmuramic acid 6-phosphate etherase (302 aa).

The region spanning 58–221 (IGKAFLNGGR…STGAMVKTGK (164 aa)) is the SIS domain. Glu86 serves as the catalytic Proton donor. The active site involves Glu117.

The protein belongs to the GCKR-like family. MurNAc-6-P etherase subfamily. Homodimer.

It catalyses the reaction N-acetyl-D-muramate 6-phosphate + H2O = N-acetyl-D-glucosamine 6-phosphate + (R)-lactate. It functions in the pathway amino-sugar metabolism; N-acetylmuramate degradation. Specifically catalyzes the cleavage of the D-lactyl ether substituent of MurNAc 6-phosphate, producing GlcNAc 6-phosphate and D-lactate. This chain is N-acetylmuramic acid 6-phosphate etherase, found in Clostridium botulinum (strain Loch Maree / Type A3).